The chain runs to 372 residues: GTPase Obg (372 aa).

Residues 1-159 enclose the Obg domain; the sequence is MKFVDEATIE…RRLRLELKVL (159 aa). In terms of domain architecture, OBG-type G spans 160–336; it reads ADVGLLGLPN…LIWALQDYLD (177 aa). Residues 166–173, 191–195, 213–216, 288–291, and 317–319 contribute to the GTP site; these read GLPNAGKS, FTTLH, DIPG, NKLD, and SGL. Residues Ser173 and Thr193 each contribute to the Mg(2+) site. A disordered region spans residues 341 to 372; that stretch reads KEQITQDKADGSYVHEDPRFDTTRDAPPSGKD.

It belongs to the TRAFAC class OBG-HflX-like GTPase superfamily. OBG GTPase family. As to quaternary structure, monomer. It depends on Mg(2+) as a cofactor.

It is found in the cytoplasm. An essential GTPase which binds GTP, GDP and possibly (p)ppGpp with moderate affinity, with high nucleotide exchange rates and a fairly low GTP hydrolysis rate. Plays a role in control of the cell cycle, stress response, ribosome biogenesis and in those bacteria that undergo differentiation, in morphogenesis control. In Bordetella avium (strain 197N), this protein is GTPase Obg.